We begin with the raw amino-acid sequence, 277 residues long: Undecaprenyl-diphosphatase (277 aa).

Transmembrane regions (helical) follow at residues 19–39, 44–64, 89–109, 122–142, 154–174, 195–215, 224–244, and 257–277; these read FLPV…PFYG, FDDL…LFLY, FHFL…GFIA, LLEI…VAEW, IGFK…IPGM, AEFS…YKLI, NTIP…TLVI, and SVFG…TKLI.

The protein belongs to the UppP family.

It is found in the cell inner membrane. The enzyme catalyses di-trans,octa-cis-undecaprenyl diphosphate + H2O = di-trans,octa-cis-undecaprenyl phosphate + phosphate + H(+). Its function is as follows. Catalyzes the dephosphorylation of undecaprenyl diphosphate (UPP). Confers resistance to bacitracin. This chain is Undecaprenyl-diphosphatase, found in Leptospira interrogans serogroup Icterohaemorrhagiae serovar copenhageni (strain Fiocruz L1-130).